The chain runs to 198 residues: MAEKENTKRNRREEILQALAQMLESSDGSQRITTAKLAANVGVSEAALYRHFPSKTRMFDSLIEFIEDSLMSRINLILQDEKETFNRLRLILLLVLGFAERNPGLTRIMTGHALMFEQDRLQGRINQLFERIEMQLRQVLREKKLRDGQGFIHDEALLATQLLAFCEGMLSRFVRSEFRYCPTQEFDSRWPLIVAQLQ.

The region spanning 9 to 70 is the HTH tetR-type domain; sequence RNRREEILQA…SLIEFIEDSL (62 aa). The segment at residues 33–52 is a DNA-binding region (H-T-H motif); the sequence is TTAKLAANVGVSEAALYRHF. A coiled-coil region spans residues 119–144; it reads DRLQGRINQLFERIEMQLRQVLREKK.

This sequence belongs to the nucleoid occlusion factor SlmA family. Homodimer. Interacts with FtsZ.

Its subcellular location is the cytoplasm. It localises to the nucleoid. Its function is as follows. Required for nucleoid occlusion (NO) phenomenon, which prevents Z-ring formation and cell division over the nucleoid. Acts as a DNA-associated cell division inhibitor that binds simultaneously chromosomal DNA and FtsZ, and disrupts the assembly of FtsZ polymers. SlmA-DNA-binding sequences (SBS) are dispersed on non-Ter regions of the chromosome, preventing FtsZ polymerization at these regions. This is Nucleoid occlusion factor SlmA from Yersinia pseudotuberculosis serotype I (strain IP32953).